The sequence spans 299 residues: Epimerase family protein SH2119 (299 aa).

The protein belongs to the NAD(P)-dependent epimerase/dehydratase family. SDR39U1 subfamily.

In Staphylococcus haemolyticus (strain JCSC1435), this protein is Epimerase family protein SH2119.